The sequence spans 650 residues: MRGGGFGDRDRDRDRGGFGARGGSGLPPKKFGNPGERLRKKKWDLSELPKFEKNFYVEHPEVARLTPYEVDELRRKKEITVRGGDVCPKPVFAFHHANFPQYVMDVLMDQHFTEPTPIQCQGFPLALSGRDMVGIAQTGSGKTLAYLLPAIVHINHQPYLERGDGPICLVLAPTRELAQQVQQVADDYGKCSRLKSTCIYGGAPKGPQIRDLERGVEICIATPGRLIDFLESGKTNLRRCTYLVLDEADRMLDMGFEPQIRKIVDQIRPDRQTLMWSATWPKEVRQLAEDFLRDYTQINVGNLELSANHNILQIVDVCMESEKDHKLIQLMEEIMAEKENKTIIFVETKRRCDDLTRRMRRDGWPAMCIHGDKSQPERDWVLNEFRSGKAPILIATDVASRGLDVEDVKFVINYDYPNSSEDYVHRIGRTARSTNKGTAYTFFTPGNLKQARELIKVLEEANQAINPKLMQLVDHRGGGGGGGGRSRYRTTSSANNPNLMYQDECDRRLRGVKDGGRRDSTSYRDRSETDRASYANGSGYGSPNSAFGAQAGQYTYAQGTYGAAAYGTSGYTAQEYAAGTYGASSTASAGRSSQSSSQQFSGIGRSGQQPQPLMSQQFAQPPGATNMIGYMGQTAYQYPPPPPPPPPSRK.

Positions 1–38 (MRGGGFGDRDRDRDRGGFGARGGSGLPPKKFGNPGERL) are disordered. The segment covering 7–16 (GDRDRDRDRG) has biased composition (basic and acidic residues). Lys29, Lys30, and Lys42 each carry N6-acetyllysine. A Glycyl lysine isopeptide (Lys-Gly) (interchain with G-Cter in SUMO); alternate cross-link involves residue Lys50. Lys50 participates in a covalent cross-link: Glycyl lysine isopeptide (Lys-Gly) (interchain with G-Cter in SUMO1); alternate. Residue Lys50 forms a Glycyl lysine isopeptide (Lys-Gly) (interchain with G-Cter in SUMO2); alternate linkage. Positions 92 to 120 (FAFHHANFPQYVMDVLMDQHFTEPTPIQC) match the Q motif motif. In terms of domain architecture, Helicase ATP-binding spans 123–298 (FPLALSGRDM…EDFLRDYTQI (176 aa)). Residue 136 to 143 (AQTGSGKT) participates in ATP binding. The short motif at 246 to 249 (DEAD) is the DEAD box element. Residues 326–473 (KLIQLMEEIM…AINPKLMQLV (148 aa)) form the Helicase C-terminal domain. Phosphothreonine is present on Thr444. Residue Lys449 forms a Glycyl lysine isopeptide (Lys-Gly) (interchain with G-Cter in SUMO2) linkage. Residues 468 to 650 (KLMQLVDHRG…PPPPPPPSRK (183 aa)) form a transactivation domain region. 2 disordered regions span residues 472–543 (LVDH…YGSP) and 583–650 (ASST…PSRK). Residues 489–499 (RTTSSANNPNL) are compositionally biased toward polar residues. The span at 504–531 (ECDRRLRGVKDGGRRDSTSYRDRSETDR) shows a compositional bias: basic and acidic residues. Over residues 583–609 (ASSTASAGRSSQSSSQQFSGIGRSGQQ) the composition is skewed to low complexity. At Arg605 the chain carries Omega-N-methylarginine. Residues 610–619 (PQPLMSQQFA) are compositionally biased toward polar residues. Residues 638-650 (YPPPPPPPPPSRK) show a composition bias toward pro residues. The tract at residues 639-647 (PPPPPPPPP) is interaction with YAP1.

Belongs to the DEAD box helicase family. DDX5/DBP2 subfamily. Interacts with DDX5 in an RNA-independent manner. Interacts with CDK9 transcription elongation complex under basal conditions. Following cell stimulation with poly(I:C), a synthetic double-stranded RNA mimicking viral infection, the interaction with CDK9 is decreased. Interacts with ESR1 in an estrogen-independent manner. Interacts with HNRNPH1; this interaction is important for the regulation of alternative splicing on G-quadruplex structures. At high, but not low, cell density, interacts with DROSHA and DGCR8, the core components of the microprocessor complex involved in the maturation of primary microRNAs (pri-miRNAs) into pre-miRNAs. The interaction with DGCR8 is reduced during mitosis. At low, but not high, cell density, interacts with YAP1 and with its paralog, WWTR1/TAZ. Interactions with DROSHA and YAP1 are mutually exclusive. In vitro, the pre-miRNA processing activity of the DDX17-containing microprocessor complex is weaker than that of the DROSHA/DGCR8 microprocessor complex. Interacts with UPF3B. Interacts with NFAT5; this interaction leads to DDX17 recruitment to LNC2 and S100A4 promoters and NFAT5-mediated DDX17-enhanced transactivation. Interacts with HDAC1, HDAC2 and HDAC3; this interaction with HDAC1 and HDAC3, but not HDAC2, depends upon DDX17 acetylation. Interacts with ZC3HAV1 (via N-terminal domain) in an RNA-independent manner. Interacts with EXOSC3/RRP40 and EXOSC5/RRP46; this interaction may be indirect and mediated by ZC3HAV1-binding. Interacts with EP300; this interaction leads to acetylation at lysine residues. Interacts with CREBBP/CBP and KAT2B/P/CAF. Directly interacts with CTNNB1. Interacts with MYOD1. Interacts with TP53. Interacts with DCP1A in an RNA-independent manner. Interacts with DCP2 in an RNA-dependent manner. Interacts with DHX36; this interaction occurs in a RNA-dependent manner. Interacts with ERCC6. Sumoylation significantly increases stability. It also promotes interaction specifically with HDAC1 (but not HDAC2, nor HDAC3) and strongly stimulates ESR1 and TP53 coactivation. In terms of processing, acetylation at lysine residues stabilizes the protein, stimulates interaction with HDAC1 and HDAC3, but not HDAC2, and represses ESR1 and TP53 coactivation activity.

The protein localises to the nucleus. It localises to the nucleolus. It is found in the cytoplasm. Its subcellular location is the cytosol. It carries out the reaction ATP + H2O = ADP + phosphate + H(+). Its function is as follows. As an RNA helicase, unwinds RNA and alters RNA structures through ATP binding and hydrolysis. Involved in multiple cellular processes, including pre-mRNA splicing, alternative splicing, ribosomal RNA processing and miRNA processing, as well as transcription regulation. Regulates the alternative splicing of exons exhibiting specific features. This function requires the RNA helicase activity. Affects NFAT5 and histone macro-H2A.1/MACROH2A1 alternative splicing in a CDK9-dependent manner. Affects splicing of mediators of steroid hormone signaling pathway, including kinases that phosphorylates ESR1 and transcriptional regulators. By acting splicing of regulatory factors, participates in ESR1 and AR stabilization. Promotes the inclusion of specific AC-rich alternative exons in CD44 transcripts. In myoblasts and epithelial cells, cooperates with HNRNPH1 to control the splicing of specific subsets of exons. In addition to binding mature mRNAs, also interacts with certain pri-microRNAs, including MIR132/miR-132, and stabilizes the primary transcript. Also participates in the MIR132 processing, resulting in significantly higher levels of mature MIR132 than MIR212 despite the fact that both are cotranscribed and co-regulated. Binding of pri-microRNAs may occur on the 3' segment flanking the stem loop via the 5'-[ACG]CAUC[ACU]-3' consensus sequence. Participates in MYC down-regulation at high cell density through the production of MYC-targeting microRNAs. Along with DDX5, may be involved in the processing of the 32S intermediate into the mature 28S rRNA. Promoter-specific transcription regulator, functioning as a coactivator or corepressor depending on the context of the promoter and the transcriptional complex in which it exists. Enhances NFAT5 transcriptional activity. Synergizes with TP53 in the activation of the MDM2 promoter; this activity requires acetylation on lysine residues. May also coactivate MDM2 transcription through a TP53-independent pathway. Coactivates MMP7 transcription. Along with CTNNB1, coactivates MYC, JUN, FOSL1 and cyclin D1/CCND1 transcription. Alone or in combination with DDX5 and/or SRA1 non-coding RNA, plays a critical role in promoting the assembly of proteins required for the formation of the transcription initiation complex and chromatin remodeling leading to coactivation of MYOD1-dependent transcription. This helicase-independent activity is required for skeletal muscle cells to properly differentiate into myotubes. During epithelial-to-mesenchymal transition, coregulates SMAD-dependent transcriptional activity, directly controlling key effectors of differentiation, including miRNAs which in turn directly repress its expression. Plays a role in estrogen and testosterone signaling pathway at several levels. Mediates the use of alternative promoters in estrogen-responsive genes and regulates transcription and splicing of a large number of steroid hormone target genes. Contrary to the splicing regulation activity, transcriptional coregulation of the estrogen receptor ESR1 is helicase activity-independent. Plays a role in innate immunity. Specifically restricts bunyavirus infection, including Rift Valley fever virus (RVFV) or La Crosse virus (LACV), but not vesicular stomatitis virus (VSV), in an interferon- and DROSHA-independent manner. Binds to RVFV RNA, likely via structured viral RNA elements. Promotes mRNA degradation mediated by the antiviral zinc-finger protein ZC3HAV1, in an ATPase-dependent manner. The sequence is that of Probable ATP-dependent RNA helicase DDX17 (Ddx17) from Mus musculus (Mouse).